Here is a 796-residue protein sequence, read N- to C-terminus: Protein translocase subunit SecA 2 (796 aa).

Residues Q84, 102–106, and D496 each bind ATP; that span reads GEGKT.

The protein belongs to the SecA family. Monomer and homodimer. Part of the essential Sec protein translocation apparatus which comprises SecA, SecYEG and auxiliary proteins SecDF. Other proteins may also be involved.

It localises to the cell membrane. The protein resides in the cytoplasm. It carries out the reaction ATP + H2O + cellular proteinSide 1 = ADP + phosphate + cellular proteinSide 2.. In terms of biological role, part of the Sec protein translocase complex. Interacts with the SecYEG preprotein conducting channel. Has a central role in coupling the hydrolysis of ATP to the transfer of proteins into and across the cell membrane, serving as an ATP-driven molecular motor driving the stepwise translocation of polypeptide chains across the membrane. The polypeptide is Protein translocase subunit SecA 2 (Staphylococcus haemolyticus (strain JCSC1435)).